The primary structure comprises 108 residues: MNKQWLHFFSVLLLCYVIEETCSLKVEDLPLPKTYLKAVELAKKDAGKDTKLLEKGLLILKNNRRDCMTNCKLVDTCHRLSPECCPEMTPTCLKLDIVQAFLKAQGKL.

Residues 1–24 (MNKQWLHFFSVLLLCYVIEETCSL) form the signal peptide.

The protein belongs to the scoloptoxin-10 family. Contains 3 disulfide bonds. Expressed by the venom gland.

The protein localises to the secreted. The chain is U-scoloptoxin(10)-Sm1a from Scolopendra morsitans (Tanzanian blue ringleg centipede).